The chain runs to 498 residues: Aspartyl/glutamyl-tRNA(Asn/Gln) amidotransferase subunit B (498 aa).

It belongs to the GatB/GatE family. GatB subfamily. In terms of assembly, heterotrimer of A, B and C subunits.

It catalyses the reaction L-glutamyl-tRNA(Gln) + L-glutamine + ATP + H2O = L-glutaminyl-tRNA(Gln) + L-glutamate + ADP + phosphate + H(+). The enzyme catalyses L-aspartyl-tRNA(Asn) + L-glutamine + ATP + H2O = L-asparaginyl-tRNA(Asn) + L-glutamate + ADP + phosphate + 2 H(+). Functionally, allows the formation of correctly charged Asn-tRNA(Asn) or Gln-tRNA(Gln) through the transamidation of misacylated Asp-tRNA(Asn) or Glu-tRNA(Gln) in organisms which lack either or both of asparaginyl-tRNA or glutaminyl-tRNA synthetases. The reaction takes place in the presence of glutamine and ATP through an activated phospho-Asp-tRNA(Asn) or phospho-Glu-tRNA(Gln). The sequence is that of Aspartyl/glutamyl-tRNA(Asn/Gln) amidotransferase subunit B from Erythrobacter litoralis (strain HTCC2594).